The chain runs to 507 residues: ATP synthase subunit alpha, chloroplastic (507 aa).

170 to 177 (IGDRQTGK) is a binding site for ATP.

Belongs to the ATPase alpha/beta chains family. As to quaternary structure, F-type ATPases have 2 components, CF(1) - the catalytic core - and CF(0) - the membrane proton channel. CF(1) has five subunits: alpha(3), beta(3), gamma(1), delta(1), epsilon(1). CF(0) has four main subunits: a, b, b' and c.

It is found in the plastid. It localises to the chloroplast thylakoid membrane. It carries out the reaction ATP + H2O + 4 H(+)(in) = ADP + phosphate + 5 H(+)(out). Its function is as follows. Produces ATP from ADP in the presence of a proton gradient across the membrane. The alpha chain is a regulatory subunit. This is ATP synthase subunit alpha, chloroplastic from Adiantum capillus-veneris (Maidenhair fern).